A 323-amino-acid polypeptide reads, in one-letter code: Leucine-rich repeat-containing protein 46 (323 aa).

4 LRR repeats span residues 49 to 70 (ELET…EKLR), 71 to 92 (NIHS…ACIT), 93 to 114 (SLRF…LDLQ), and 115 to 135 (YLQF…DELP). Positions 146–188 (NPCTNQEGYRKMVIGALPLLLDLDKQPILERWTSDEEDKSSDD) constitute an LRRCT domain. Phosphothreonine is present on threonine 178. 3 positions are modified to phosphoserine: serine 179, serine 185, and serine 186. Residues 203-228 (RGFFKDLEQELHQHQERRQQAALTEH) are a coiled coil. The segment at 249–323 (MAGDCSSTAT…TKMTNKKSTK (75 aa)) is disordered. Residues 267 to 316 (PKATSSTQTASTTKKQVSKNQKSSVQARKGALAATTSKTSQAATPSMTKM) are compositionally biased toward low complexity. Serine 303 is subject to Phosphoserine.

In terms of tissue distribution, testis-specific (at protein level).

The protein localises to the cell projection. It localises to the cilium. Its subcellular location is the flagellum. In terms of biological role, required for normal spermatogenesis and male fertility. Plays an important role in sperm flagellum biogenesis. The chain is Leucine-rich repeat-containing protein 46 (Lrrc46) from Mus musculus (Mouse).